Here is an 82-residue protein sequence, read N- to C-terminus: Putative membrane protein insertion efficiency factor (82 aa).

The protein belongs to the UPF0161 family.

The protein localises to the cell inner membrane. Its function is as follows. Could be involved in insertion of integral membrane proteins into the membrane. The protein is Putative membrane protein insertion efficiency factor of Synechococcus elongatus (strain ATCC 33912 / PCC 7942 / FACHB-805) (Anacystis nidulans R2).